The following is a 441-amino-acid chain: D-aminoacyl-tRNA deacylase (441 aa).

This sequence belongs to the DtdA deacylase family. As to quaternary structure, monomer. Zn(2+) is required as a cofactor.

The catalysed reaction is a D-aminoacyl-tRNA + H2O = a tRNA + a D-alpha-amino acid + H(+). It catalyses the reaction glycyl-tRNA(Ala) + H2O = tRNA(Ala) + glycine + H(+). In terms of biological role, D-aminoacyl-tRNA deacylase with broad substrate specificity. By recycling D-aminoacyl-tRNA to D-amino acids and free tRNA molecules, this enzyme counteracts the toxicity associated with the formation of D-aminoacyl-tRNA entities in vivo. The protein is D-aminoacyl-tRNA deacylase of Natronomonas pharaonis (strain ATCC 35678 / DSM 2160 / CIP 103997 / JCM 8858 / NBRC 14720 / NCIMB 2260 / Gabara) (Halobacterium pharaonis).